A 558-amino-acid polypeptide reads, in one-letter code: WW domain-containing adapter protein with coiled-coil (558 aa).

Disordered regions lie at residues 1-129, 159-244, and 321-461; these read MVMY…WSEH, QRQK…SPAP, and VAQQ…APGR. Positions 22–32 are enriched in polar residues; it reads QPYQTLKYSSK. 2 stretches are compositionally biased toward basic and acidic residues: residues 33 to 46 and 56 to 70; these read SHPD…RDSN and RRSD…DNTG. Positions 72–82 are enriched in basic residues; it reads GRAKAIHPHRG. The segment covering 99 to 116 has biased composition (low complexity); the sequence is NHSSLHSSNSHSNPNKSS. Residues 120 to 153 enclose the WW domain; it reads FEPADDWSEHISSSGKKYYYNCRTEVSQWEKPKE. Residues 175–184 are compositionally biased toward basic and acidic residues; sequence PKDRDYRREA. Polar residues predominate over residues 188–200; that stretch reads TPASYSSTKSSIA. Residues 204–217 are compositionally biased toward low complexity; the sequence is PSSLTPSSSSAAVS. Composition is skewed to polar residues over residues 223-234 and 321-378; these read NSASSASGSTVP and VAQQ…MTVK. The segment covering 402-431 has biased composition (low complexity); that stretch reads SPRTLQRQSSQRSPSPGPNHMGSNSSSSSN. Positions 432–443 are enriched in gly residues; the sequence is NGGGGGGQGPGV. The stretch at 529 to 555 forms a coiled coil; that stretch reads QATLREQRILFLRQQIKELEKLKNQNS.

Its subcellular location is the nucleus. Its function is as follows. Acts as a linker between gene transcription and histone H2B monoubiquitination at 'Lys-120' (H2BK120ub1). Positive regulator of amino acid starvation-induced autophagy. Positively regulates MTOR activity. May negatively regulate the ubiquitin proteasome pathway. This is WW domain-containing adapter protein with coiled-coil (waca) from Danio rerio (Zebrafish).